A 328-amino-acid polypeptide reads, in one-letter code: Probable fused nickel transport protein LarMN (328 aa).

The next 8 membrane-spanning stretches (helical) occupy residues 8-28, 42-62, 75-95, 103-123, 138-158, 187-207, 229-249, and 296-316; these read LSPATCGTLVTAMAPVWTVAV, LPMLGIAASLAFLIMMFNLPI, LLAVLIGPWAACLALTVTLLL, GGILAFGANALNMAVIMPFVG, LGLAIGAYLGINMAALVAGIE, MLTAHLLVAGWVEVVFTLLVF, PWIALLLGLAVLSPLGLLASN, and PVSVGYILSAITAVLIFLLLI.

Belongs to the CbiM family. NikM subfamily. May form an energy-coupling factor (ECF) transporter complex composed of an ATP-binding protein (A component, LarO), a transmembrane protein (T component, LarQ) and a fused possible substrate-capture protein (S component, LarMN) of unknown stoichiometry.

It is found in the cell membrane. Probably part of the energy-coupling factor (ECF) transporter complex LarMNQO involved in nickel import. The protein is Probable fused nickel transport protein LarMN of Lactiplantibacillus plantarum (strain ATCC BAA-793 / NCIMB 8826 / WCFS1) (Lactobacillus plantarum).